The sequence spans 206 residues: Recombination protein RecR (206 aa).

The C4-type zinc finger occupies 58-73 (CNICGYITEKNICNFC). The Toprim domain maps to 81–178 (STIMIVADNR…KITKLAYGIP (98 aa)).

This sequence belongs to the RecR family.

May play a role in DNA repair. It seems to be involved in an RecBC-independent recombinational process of DNA repair. It may act with RecF and RecO. In Phytoplasma mali (strain AT), this protein is Recombination protein RecR.